The chain runs to 232 residues: Small ribosomal subunit protein uS3 (232 aa).

Positions 39 to 107 (IRKFLKTKLY…DIAINIKEER (69 aa)) constitute a KH type-2 domain. Over residues 213-222 (QADKNEDTSP) the composition is skewed to basic and acidic residues. Positions 213–232 (QADKNEDTSPKKPRRARRGK) are disordered. Positions 223–232 (KKPRRARRGK) are enriched in basic residues.

It belongs to the universal ribosomal protein uS3 family. Part of the 30S ribosomal subunit. Forms a tight complex with proteins S10 and S14.

Functionally, binds the lower part of the 30S subunit head. Binds mRNA in the 70S ribosome, positioning it for translation. This chain is Small ribosomal subunit protein uS3, found in Campylobacter fetus subsp. fetus (strain 82-40).